The chain runs to 367 residues: tRNA-specific 2-thiouridylase MnmA (367 aa).

ATP-binding positions include glycine 12 to serine 19 and methionine 38. Residues asparagine 98–aspartate 100 are interaction with target base in tRNA. Cysteine 103 acts as the Nucleophile in catalysis. Residues cysteine 103 and cysteine 200 are joined by a disulfide bond. Glycine 128 is an ATP binding site. Residues lysine 150 to glutamine 152 form an interaction with tRNA region. Cysteine 200 serves as the catalytic Cysteine persulfide intermediate. An interaction with tRNA region spans residues arginine 312–tyrosine 313.

Belongs to the MnmA/TRMU family.

Its subcellular location is the cytoplasm. It carries out the reaction S-sulfanyl-L-cysteinyl-[protein] + uridine(34) in tRNA + AH2 + ATP = 2-thiouridine(34) in tRNA + L-cysteinyl-[protein] + A + AMP + diphosphate + H(+). In terms of biological role, catalyzes the 2-thiolation of uridine at the wobble position (U34) of tRNA, leading to the formation of s(2)U34. The polypeptide is tRNA-specific 2-thiouridylase MnmA (Psychromonas ingrahamii (strain DSM 17664 / CCUG 51855 / 37)).